Reading from the N-terminus, the 332-residue chain is Ribosomal RNA small subunit methyltransferase H (332 aa).

Residues 42 to 44 (GGH), D62, F86, D105, and Q112 each bind S-adenosyl-L-methionine.

This sequence belongs to the methyltransferase superfamily. RsmH family.

It localises to the cytoplasm. The catalysed reaction is cytidine(1402) in 16S rRNA + S-adenosyl-L-methionine = N(4)-methylcytidine(1402) in 16S rRNA + S-adenosyl-L-homocysteine + H(+). In terms of biological role, specifically methylates the N4 position of cytidine in position 1402 (C1402) of 16S rRNA. This is Ribosomal RNA small subunit methyltransferase H from Cupriavidus pinatubonensis (strain JMP 134 / LMG 1197) (Cupriavidus necator (strain JMP 134)).